We begin with the raw amino-acid sequence, 164 residues long: Cell division protein SepF (164 aa).

The segment at 21 to 71 is disordered; the sequence is YQQGQQPAQQQQSPVQAVPTPVPAPQQQAKRAPVTPLHKPSTTTRNAAPAE. The segment covering 22-49 has biased composition (low complexity); the sequence is QQGQQPAQQQQSPVQAVPTPVPAPQQQA.

This sequence belongs to the SepF family. In terms of assembly, homodimer. Interacts with FtsZ.

Its subcellular location is the cytoplasm. In terms of biological role, cell division protein that is part of the divisome complex and is recruited early to the Z-ring. Probably stimulates Z-ring formation, perhaps through the cross-linking of FtsZ protofilaments. Its function overlaps with FtsA. This chain is Cell division protein SepF, found in Clavibacter sepedonicus (Clavibacter michiganensis subsp. sepedonicus).